The sequence spans 126 residues: Fluoride-specific ion channel FluC (126 aa).

Transmembrane regions (helical) follow at residues 6-26, 36-56, 68-88, and 99-119; these read FVAV…FAVL, YGTL…VGFF, LLAV…SSEV, and IGML…MLGL. Na(+)-binding residues include Gly76 and Thr79.

The protein belongs to the fluoride channel Fluc/FEX (TC 1.A.43) family.

It is found in the cell inner membrane. The enzyme catalyses fluoride(in) = fluoride(out). Na(+) is not transported, but it plays an essential structural role and its presence is essential for fluoride channel function. Fluoride-specific ion channel. Important for reducing fluoride concentration in the cell, thus reducing its toxicity. The polypeptide is Fluoride-specific ion channel FluC (Ralstonia nicotianae (strain ATCC BAA-1114 / GMI1000) (Ralstonia solanacearum)).